The chain runs to 490 residues: Cytochrome P450 2C20 (490 aa).

Position 435 (Cys435) interacts with heme.

It belongs to the cytochrome P450 family. Heme is required as a cofactor.

Its subcellular location is the endoplasmic reticulum membrane. It localises to the microsome membrane. The catalysed reaction is an organic molecule + reduced [NADPH--hemoprotein reductase] + O2 = an alcohol + oxidized [NADPH--hemoprotein reductase] + H2O + H(+). Cytochromes P450 are a group of heme-thiolate monooxygenases. In liver microsomes, this enzyme is involved in an NADPH-dependent electron transport pathway. It oxidizes a variety of structurally unrelated compounds, including steroids, fatty acids, and xenobiotics. This chain is Cytochrome P450 2C20 (CYP2C20), found in Macaca fascicularis (Crab-eating macaque).